Consider the following 625-residue polypeptide: Interferon-induced GTP-binding protein MxE (625 aa).

The Dynamin-type G domain maps to 40–313 (DLNLPAIAVI…LVEHIAKNLP (274 aa)). The G1 motif stretch occupies residues 50-57 (GDQSSGKS). Residue 50-57 (GDQSSGKS) participates in GTP binding. Residues 75-77 (VTR) form a G2 motif region. The interval 151 to 154 (DLPG) is G3 motif. Residues 151–155 (DLPGI) and 220–223 (TKPD) contribute to the GTP site. Residues 220 to 223 (TKPD) are G4 motif. Positions 252–255 (KCRG) are G5 motif. The region spanning 536 to 625 (VREMAYHLTS…RVLSKFVHSA (90 aa)) is the GED domain.

This sequence belongs to the TRAFAC class dynamin-like GTPase superfamily. Dynamin/Fzo/YdjA family.

The protein resides in the cytoplasm. The chain is Interferon-induced GTP-binding protein MxE (mxe) from Danio rerio (Zebrafish).